Reading from the N-terminus, the 357-residue chain is Histidinol-phosphate aminotransferase (357 aa).

Position 218 is an N6-(pyridoxal phosphate)lysine (K218).

The protein belongs to the class-II pyridoxal-phosphate-dependent aminotransferase family. Histidinol-phosphate aminotransferase subfamily. As to quaternary structure, homodimer. Pyridoxal 5'-phosphate serves as cofactor.

The catalysed reaction is L-histidinol phosphate + 2-oxoglutarate = 3-(imidazol-4-yl)-2-oxopropyl phosphate + L-glutamate. The protein operates within amino-acid biosynthesis; L-histidine biosynthesis; L-histidine from 5-phospho-alpha-D-ribose 1-diphosphate: step 7/9. This Chlorobium luteolum (strain DSM 273 / BCRC 81028 / 2530) (Pelodictyon luteolum) protein is Histidinol-phosphate aminotransferase.